The sequence spans 825 residues: 5E5 antigen (825 aa).

The tract at residues 126-825 is disordered; sequence LSRDGYETET…RPRPSPKSPR (700 aa). Residues 157–180 are compositionally biased toward pro residues; the sequence is PRAPPEPPDPGAPRPPPDPGPLPL. The segment covering 191-200 has biased composition (polar residues); that stretch reads VQVSTEQLLM. Positions 217–237 are enriched in basic and acidic residues; it reads TRGDRTQEGGEKPREQREGPR. Low complexity predominate over residues 247–256; it reads QQEESPQQEP. 3 stretches are compositionally biased toward basic and acidic residues: residues 257–277, 315–342, and 392–406; these read SSER…HEGE, VPKD…RDWT, and QERE…ESPR. Positions 437-449 are enriched in basic residues; that stretch reads RRPRKRRGRKGRM. Residues 455–477 are compositionally biased toward low complexity; it reads TTATSASATGGPAEEAGASAPEG. The segment covering 485-505 has biased composition (basic residues); the sequence is GRARGPRQQARRRHGPQRRRG. The segment covering 524 to 536 has biased composition (polar residues); sequence GTTSGEQRADQSQ. The span at 537–562 shows a compositional bias: low complexity; the sequence is TLPALAGAPTAHAHAVPGPGPAAATL. A compositionally biased stretch (basic residues) spans 565–575; that stretch reads RGRRGSWRGGR. Residues 576–588 are compositionally biased toward gly residues; it reads RGGGAGASGGGRG. Over residues 721–733 the composition is skewed to pro residues; the sequence is FPPPPPTRPPPVL. Residues 734-750 show a composition bias toward low complexity; sequence LPLLRLTCAGDPGASRP.

As to expression, expressed in neurons.

Its subcellular location is the nucleus. Might have DNA-binding ability. The polypeptide is 5E5 antigen (Rattus norvegicus (Rat)).